We begin with the raw amino-acid sequence, 648 residues long: TBC1 domain family member 17 (648 aa).

A required for interaction with OPTN region spans residues D218–G309. Residues P240 to P259 form a disordered region. The Rab-GAP TBC domain occupies G310 to L520. Residues L594–S648 are disordered. Pro residues predominate over residues P597 to S624. Phosphoserine is present on residues S602 and S604. T606 is modified (phosphothreonine). At S608 the chain carries Phosphoserine. At T615 the chain carries Phosphothreonine. A compositionally biased stretch (low complexity) spans T625 to S634. Residues L638 to S648 show a composition bias toward acidic residues.

Interacts with OPTN; this interaction mediates TBC1D17 transient association with Rab8.

Its subcellular location is the cytoplasmic vesicle. The protein resides in the autophagosome. The protein localises to the cytoplasm. It is found in the recycling endosome. In terms of biological role, probable RAB GTPase-activating protein that inhibits RAB8A/B function. Reduces Rab8 recruitment to tubules emanating from the endocytic recycling compartment (ERC) and inhibits Rab8-mediated endocytic trafficking, such as that of transferrin receptor (TfR). Involved in regulation of autophagy. The chain is TBC1 domain family member 17 from Homo sapiens (Human).